Consider the following 220-residue polypeptide: NAD(P)H-hydrate epimerase (220 aa).

In terms of domain architecture, YjeF N-terminal spans 6–203; sequence ARHLTTLATG…SFDLPEALFH (198 aa). 53-57 provides a ligand contact to (6S)-NADPHX; that stretch reads HNGGV. 2 residues coordinate K(+): asparagine 54 and aspartate 116. (6S)-NADPHX-binding positions include 120-126 and aspartate 149; that span reads GMRLEGP. Threonine 152 contributes to the K(+) binding site.

It belongs to the NnrE/AIBP family. The cofactor is K(+).

It catalyses the reaction (6R)-NADHX = (6S)-NADHX. It carries out the reaction (6R)-NADPHX = (6S)-NADPHX. Its function is as follows. Catalyzes the epimerization of the S- and R-forms of NAD(P)HX, a damaged form of NAD(P)H that is a result of enzymatic or heat-dependent hydration. This is a prerequisite for the S-specific NAD(P)H-hydrate dehydratase to allow the repair of both epimers of NAD(P)HX. In Truepera radiovictrix (strain DSM 17093 / CIP 108686 / LMG 22925 / RQ-24), this protein is NAD(P)H-hydrate epimerase.